A 372-amino-acid polypeptide reads, in one-letter code: Lectin/endochitinase 1 (372 aa).

Residues 1-23 (MMMRFLSAVVIMSSAMAVGLVSA) form the signal peptide. Glutamine 24 provides a ligand contact to substrate. Pyrrolidone carboxylic acid is present on glutamine 24. Chitin-binding type-1 domains follow at residues 24-64 (QRCG…KCWS) and 69-111 (DHRC…RCSS). Intrachain disulfides connect cysteine 26/cysteine 41, cysteine 35/cysteine 47, cysteine 40/cysteine 54, and cysteine 58/cysteine 62. Position 42–53 (42–53 (SIWGWCGDSEPY)) interacts with substrate. Zn(2+) is bound at residue histidine 70. Cystine bridges form between cysteine 72/cysteine 87, cysteine 81/cysteine 93, cysteine 86/cysteine 100, and cysteine 105/cysteine 109. Histidine 90 contacts Zn(2+). Positions 113 to 128 (VRGPRVALSGNSTANS) are spacer. The N-linked (GlcNAc...) asparagine glycan is linked to asparagine 123. The chitinase stretch occupies residues 129–372 (IGNVVVTEPL…FQRIQMRVAA (244 aa)).

Monomer and homodimer. Zinc favors dimerization. Active in the monomeric form but probably inactive in the dimeric form. The interaction with glycans on the mammalian TCR and MHC molecules of the T-cell and antigen-presenting cell, respectively, is inhibited by oligomers of GlcNAc. In terms of processing, proteolytically processed to yield a very small protein (8.5 kDa, 86 AA) containing only the two chitin-binding domains. Rhizomes and inflorescence with immature seeds.

The catalysed reaction is Random endo-hydrolysis of N-acetyl-beta-D-glucosaminide (1-&gt;4)-beta-linkages in chitin and chitodextrins.. Its function is as follows. Functions both as a chitinase and as a N-acetyl-D-glucosamine binding lectin. Inhibits the growth of several phytopathogenic chitin-containing fungi. Also possesses insecticidal activity and superantigenic properties. This chain is Lectin/endochitinase 1 (UDA1), found in Urtica dioica (Great nettle).